Reading from the N-terminus, the 88-residue chain is Small ribosomal subunit protein bS16 (88 aa).

It belongs to the bacterial ribosomal protein bS16 family.

The polypeptide is Small ribosomal subunit protein bS16 (Leptospira interrogans serogroup Icterohaemorrhagiae serovar Lai (strain 56601)).